The primary structure comprises 173 residues: 3-hydroxydecanoyl-[acyl-carrier-protein] dehydratase (173 aa).

His71 is a catalytic residue.

Belongs to the thioester dehydratase family. FabA subfamily. Homodimer.

It localises to the cytoplasm. The catalysed reaction is a (3R)-hydroxyacyl-[ACP] = a (2E)-enoyl-[ACP] + H2O. The enzyme catalyses (3R)-hydroxydecanoyl-[ACP] = (2E)-decenoyl-[ACP] + H2O. It carries out the reaction (2E)-decenoyl-[ACP] = (3Z)-decenoyl-[ACP]. It participates in lipid metabolism; fatty acid biosynthesis. Necessary for the introduction of cis unsaturation into fatty acids. Catalyzes the dehydration of (3R)-3-hydroxydecanoyl-ACP to E-(2)-decenoyl-ACP and then its isomerization to Z-(3)-decenoyl-ACP. Can catalyze the dehydratase reaction for beta-hydroxyacyl-ACPs with saturated chain lengths up to 16:0, being most active on intermediate chain length. This chain is 3-hydroxydecanoyl-[acyl-carrier-protein] dehydratase, found in Bradyrhizobium sp. (strain ORS 278).